Reading from the N-terminus, the 667-residue chain is Fermitin family homolog 3 (667 aa).

A Phosphoserine modification is found at Ser8. At Tyr11 the chain carries Phosphotyrosine. In terms of domain architecture, FERM spans 229-558 (WLDSSRCLMQ…SLPDFGISYV (330 aa)). The PH domain maps to 354 to 457 (DHLRIFRIPR…WMAGCRLASK (104 aa)). Position 504 is a phosphotyrosine (Tyr504). Phosphothreonine is present on Thr591.

The protein belongs to the kindlin family. In terms of assembly, interacts with ITGB1, ITGB2 and ITGB3 (via cytoplasmic tails). In terms of tissue distribution, highly expressed in lymph node. Expressed in thymus, spleen and leukocytes. Weakly expressed in placenta, small intestine, stomach, testis and lung. Overexpressed in B-cell malignancies.

It is found in the cell projection. Its subcellular location is the podosome. Its function is as follows. Plays a central role in cell adhesion in hematopoietic cells. Acts by activating the integrin beta-1-3 (ITGB1, ITGB2 and ITGB3). Required for integrin-mediated platelet adhesion and leukocyte adhesion to endothelial cells. Required for activation of integrin beta-2 (ITGB2) in polymorphonuclear granulocytes (PMNs). Functionally, isoform 2 may act as a repressor of NF-kappa-B and apoptosis. The chain is Fermitin family homolog 3 (FERMT3) from Homo sapiens (Human).